The primary structure comprises 598 residues: Elongation factor 4 (598 aa).

Positions 4–186 constitute a tr-type G domain; that stretch reads INIRNFAIIA…AIVSRLPAPS (183 aa). GTP contacts are provided by residues 16-21 and 133-136; these read DHGKST and NKID.

It belongs to the TRAFAC class translation factor GTPase superfamily. Classic translation factor GTPase family. LepA subfamily.

The protein resides in the cell inner membrane. The catalysed reaction is GTP + H2O = GDP + phosphate + H(+). In terms of biological role, required for accurate and efficient protein synthesis under certain stress conditions. May act as a fidelity factor of the translation reaction, by catalyzing a one-codon backward translocation of tRNAs on improperly translocated ribosomes. Back-translocation proceeds from a post-translocation (POST) complex to a pre-translocation (PRE) complex, thus giving elongation factor G a second chance to translocate the tRNAs correctly. Binds to ribosomes in a GTP-dependent manner. The sequence is that of Elongation factor 4 from Ehrlichia ruminantium (strain Gardel).